We begin with the raw amino-acid sequence, 278 residues long: S-adenosylmethionine decarboxylase proenzyme (278 aa).

The interval 96–115 (LTPESLTGESPGPLPGNKPS) is disordered. The active-site Schiff-base intermediate with substrate; via pyruvic acid is S126. S126 is subject to Pyruvic acid (Ser); by autocatalysis. H131 functions as the Proton acceptor; for processing activity in the catalytic mechanism. C154 (proton donor; for catalytic activity) is an active-site residue.

It belongs to the prokaryotic AdoMetDC family. Type 2 subfamily. Heterooctamer of four alpha and four beta chains arranged as a tetramer of alpha/beta heterodimers. It depends on pyruvate as a cofactor. Is synthesized initially as an inactive proenzyme. Formation of the active enzyme involves a self-maturation process in which the active site pyruvoyl group is generated from an internal serine residue via an autocatalytic post-translational modification. Two non-identical subunits are generated from the proenzyme in this reaction, and the pyruvate is formed at the N-terminus of the alpha chain, which is derived from the carboxyl end of the proenzyme. The post-translation cleavage follows an unusual pathway, termed non-hydrolytic serinolysis, in which the side chain hydroxyl group of the serine supplies its oxygen atom to form the C-terminus of the beta chain, while the remainder of the serine residue undergoes an oxidative deamination to produce ammonia and the pyruvoyl group blocking the N-terminus of the alpha chain.

It carries out the reaction S-adenosyl-L-methionine + H(+) = S-adenosyl 3-(methylsulfanyl)propylamine + CO2. Its pathway is amine and polyamine biosynthesis; S-adenosylmethioninamine biosynthesis; S-adenosylmethioninamine from S-adenosyl-L-methionine: step 1/1. Its function is as follows. Catalyzes the decarboxylation of S-adenosylmethionine to S-adenosylmethioninamine (dcAdoMet), the propylamine donor required for the synthesis of the polyamines spermine and spermidine from the diamine putrescine. The polypeptide is S-adenosylmethionine decarboxylase proenzyme (Alkaliphilus metalliredigens (strain QYMF)).